The sequence spans 662 residues: Calcium-dependent protease (662 aa).

A Peptidase S8 domain is found at 196–529; that stretch reads QWHLKQTTIG…YGRINALKAV (334 aa). Catalysis depends on charge relay system residues D233, H270, and S466. The P/Homo B domain occupies 535–662; the sequence is AQPEPVSIFT…IRSLTIELGF (128 aa).

It belongs to the peptidase S8 family.

The protein localises to the cytoplasm. Its function is as follows. Degrades phycobiliproteins in vitro. Has a substrate specificity similar to that of trypsin. The polypeptide is Calcium-dependent protease (prcA) (Trichormus variabilis (strain ATCC 29413 / PCC 7937) (Anabaena variabilis)).